The chain runs to 148 residues: UPF0756 membrane protein YeaL (148 aa).

The next 4 membrane-spanning stretches (helical) occupy residues Ala-14–Val-34, Leu-51–Leu-71, Leu-86–Met-106, and Val-121–Val-141.

This sequence belongs to the UPF0756 family.

It is found in the cell membrane. This chain is UPF0756 membrane protein YeaL, found in Escherichia coli (strain B / REL606).